The following is an 831-amino-acid chain: Intraflagellar transport protein 88 (831 aa).

11 TPR repeats span residues 68–101 (IFKLLRDGMSAASCKDYVTALGRIREAIKLEQKV), 120–153 (TCIWMHWAQIQALGGQPEMALSTYEKIVKTAEGA), 156–189 (AQIRFNMGNINHNLGKYNEALKNFRMAIDQASPS), 248–281 (FDPLYTVLIGYYALGVPEKMIDAYSRLIDSSILI), 492–525 (RGVHTNIAFIYYLKGDYEASARHAQIALEIDPYD), 526–559 (SFAHINLGCTYSKTNQWELSLREFLKAQEINMES), 560–593 (VQATYNAGLVYFKQQEYKTAYSCFQKVASKLPSY), 595–627 (DAIYMSADCLARMSQIDEAIQMLSNLVTMFSAV), 632–665 (PSIYIRLGELYSIAGDEGQAAHYFKEAHRLVPFS), 666–699 (LAVINWLGSHYIKNELYEQARVCFEKASRVDTTT), and 700–733 (PKWSLAVAACLRKSKQYRDAIYEYKHILKRFPTN). Residues 785–816 (RRNSVAAVGPGSRAGQDRFEASNNRVSSNTGD) are disordered. Polar residues predominate over residues 805–815 (ASNNRVSSNTG).

It localises to the cell projection. It is found in the cilium. The protein localises to the flagellum. Its subcellular location is the cytoplasm. The protein resides in the cytoskeleton. It localises to the flagellum axoneme. It is found in the flagellum basal body. Component of the intraflagellar transport complex B (IFT-B) involved in flagellar assembly. This Giardia intestinalis (strain ATCC 50803 / WB clone C6) (Giardia lamblia) protein is Intraflagellar transport protein 88.